Consider the following 88-residue polypeptide: Guanine nucleotide-binding protein subunit gamma (88 aa).

Residue Cys84 is the site of S-palmitoyl cysteine attachment. A Cysteine methyl ester modification is found at Cys85. A lipid anchor (S-farnesyl cysteine) is attached at Cys85. The propeptide at 86 to 88 is removed in mature form; that stretch reads TIM.

Belongs to the G protein gamma family. G proteins are composed of 3 units, alpha, beta and gamma.

Its subcellular location is the membrane. This is Guanine nucleotide-binding protein subunit gamma from Candida glabrata (strain ATCC 2001 / BCRC 20586 / JCM 3761 / NBRC 0622 / NRRL Y-65 / CBS 138) (Yeast).